The following is a 69-amino-acid chain: UPF0437 protein AZC_3451 (69 aa).

This sequence belongs to the UPF0437 family.

In Azorhizobium caulinodans (strain ATCC 43989 / DSM 5975 / JCM 20966 / LMG 6465 / NBRC 14845 / NCIMB 13405 / ORS 571), this protein is UPF0437 protein AZC_3451.